Consider the following 141-residue polypeptide: Transcription antitermination protein NusB (141 aa).

The protein belongs to the NusB family.

Its function is as follows. Involved in transcription antitermination. Required for transcription of ribosomal RNA (rRNA) genes. Binds specifically to the boxA antiterminator sequence of the ribosomal RNA (rrn) operons. In Clostridium botulinum (strain Loch Maree / Type A3), this protein is Transcription antitermination protein NusB.